We begin with the raw amino-acid sequence, 426 residues long: MLTIKDIHALEVMDSRGNPTIQASVILSDNTKASAIVSSGASTGKREALELRDNDKTRFLGKGVLRACENVNTVIKHNLIGLEAINQAFVDGRLKALDGTPNYANLGANASLGVSMALARASAKALNMPLYRYLGGANALTLPVPMLNIINGGSHANNSIDFQEYMIMPLGFESFKEALRASAEVYHTLKKLLDEKNQLTSVGDEGGFAPNFKNNVEPLEVISQAIEKAGYKLGEEIALALDVASSELVDEHFNYHLKGENKILNAQELVAYYKELVAKYPIVSIEDGLSEDDWEGWAFLSKELGRQIQLVGDDLFVTNASILQKGIKKNIANAILIKPNQIGTISETLETIRLAKHHAYQCVMSHRSGESEDSFIADFAVALNTGEIKTGSTARSERIAKYNRLLEIEHELKGGIYIGKELFKHG.

Glutamine 163 is a binding site for (2R)-2-phosphoglycerate. The active-site Proton donor is glutamate 205. Residues aspartate 242, glutamate 286, and aspartate 313 each coordinate Mg(2+). 4 residues coordinate (2R)-2-phosphoglycerate: lysine 338, arginine 367, serine 368, and lysine 389. Residue lysine 338 is the Proton acceptor of the active site.

The protein belongs to the enolase family. Mg(2+) is required as a cofactor.

Its subcellular location is the cytoplasm. It localises to the secreted. The protein localises to the cell surface. It carries out the reaction (2R)-2-phosphoglycerate = phosphoenolpyruvate + H2O. The protein operates within carbohydrate degradation; glycolysis; pyruvate from D-glyceraldehyde 3-phosphate: step 4/5. In terms of biological role, catalyzes the reversible conversion of 2-phosphoglycerate (2-PG) into phosphoenolpyruvate (PEP). It is essential for the degradation of carbohydrates via glycolysis. The chain is Enolase from Helicobacter acinonychis (strain Sheeba).